The sequence spans 205 residues: D-alanine--D-alanine ligase (205 aa).

An ATP-grasp domain is found at Lys111 to Phe205. Met139 to Val190 provides a ligand contact to ATP.

This sequence belongs to the D-alanine--D-alanine ligase family. It depends on Mg(2+) as a cofactor. Mn(2+) is required as a cofactor.

It localises to the cytoplasm. The enzyme catalyses 2 D-alanine + ATP = D-alanyl-D-alanine + ADP + phosphate + H(+). Its pathway is cell wall biogenesis; peptidoglycan biosynthesis. In terms of biological role, cell wall formation. The chain is D-alanine--D-alanine ligase (ddl) from Anaplasma centrale.